The following is a 604-amino-acid chain: Aspartate--tRNA(Asp/Asn) ligase (604 aa).

Glu187 contacts L-aspartate. Residues 211 to 214 (QQFK) are aspartate. Positions 233 and 461 each coordinate L-aspartate. 233-235 (RDE) is an ATP binding site. ATP is bound at residue Glu495. Residue Arg502 coordinates L-aspartate. Residue 547 to 550 (GLDR) coordinates ATP.

It belongs to the class-II aminoacyl-tRNA synthetase family. Type 1 subfamily. In terms of assembly, homodimer.

The protein resides in the cytoplasm. The enzyme catalyses tRNA(Asx) + L-aspartate + ATP = L-aspartyl-tRNA(Asx) + AMP + diphosphate. Aspartyl-tRNA synthetase with relaxed tRNA specificity since it is able to aspartylate not only its cognate tRNA(Asp) but also tRNA(Asn). Reaction proceeds in two steps: L-aspartate is first activated by ATP to form Asp-AMP and then transferred to the acceptor end of tRNA(Asp/Asn). This Chlorobium luteolum (strain DSM 273 / BCRC 81028 / 2530) (Pelodictyon luteolum) protein is Aspartate--tRNA(Asp/Asn) ligase.